Here is a 149-residue protein sequence, read N- to C-terminus: Putative pre-16S rRNA nuclease (149 aa).

This sequence belongs to the YqgF nuclease family.

The protein localises to the cytoplasm. Could be a nuclease involved in processing of the 5'-end of pre-16S rRNA. This Heliobacterium modesticaldum (strain ATCC 51547 / Ice1) protein is Putative pre-16S rRNA nuclease.